We begin with the raw amino-acid sequence, 150 residues long: uncharacterized protein (150 aa).

Belongs to the Dps family.

This is an uncharacterized protein from Kitasatospora aureofaciens (Streptomyces aureofaciens).